A 349-amino-acid chain; its full sequence is Nicotinate-nucleotide--dimethylbenzimidazole phosphoribosyltransferase (349 aa).

Residues 1–20 form a disordered region; the sequence is MEFATVSPPDPGTAAAARAR. The active-site Proton acceptor is Glu313.

It belongs to the CobT family.

It carries out the reaction 5,6-dimethylbenzimidazole + nicotinate beta-D-ribonucleotide = alpha-ribazole 5'-phosphate + nicotinate + H(+). It participates in nucleoside biosynthesis; alpha-ribazole biosynthesis; alpha-ribazole from 5,6-dimethylbenzimidazole: step 1/2. Its function is as follows. Catalyzes the synthesis of alpha-ribazole-5'-phosphate from nicotinate mononucleotide (NAMN) and 5,6-dimethylbenzimidazole (DMB). The protein is Nicotinate-nucleotide--dimethylbenzimidazole phosphoribosyltransferase of Mycolicibacterium paratuberculosis (strain ATCC BAA-968 / K-10) (Mycobacterium paratuberculosis).